A 192-amino-acid polypeptide reads, in one-letter code: Interferon (192 aa).

Positions 1 to 30 (MAVPASPQHPRGYGILLLTLLMKALAAAAA) are cleaved as a signal peptide. Disulfide bonds link cysteine 31–cysteine 128, cysteine 60–cysteine 154, and cysteine 67–cysteine 167. N-linked (GlcNAc...) asparagine glycans are attached at residues asparagine 70 and asparagine 77.

The protein belongs to the alpha/beta interferon family.

The protein resides in the secreted. Functionally, has antiviral activities. This chain is Interferon, found in Meleagris gallopavo (Wild turkey).